A 416-amino-acid chain; its full sequence is Gasdermin-B (416 aa).

The triggers pyroptosis stretch occupies residues 1–280; that stretch reads MFSVFEEITR…EKRKDVLNSL (280 aa). 2 beta stranded membrane passes run 83 to 101 and 102 to 125; these read EFQI…VRLP and KEIT…ENRI. Residues K166, K177, K190, and K192 each participate in a (Microbial infection) Glycyl lysine isopeptide (Lys-Gly) (interchain with G-Cter in ubiquitin) cross-link. Beta stranded transmembrane passes span 167 to 183 and 184 to 198; these read EETL…SQIS and QGHL…REVT. Residues 229-250 are disordered; the sequence is KSFPEEKDGASSCLGKSLGSED. The stretch at 248-276 forms a coiled coil; that stretch reads SEDSRNMKEKLEDMESVLKDLTEEKRKDV. Residue M308 forms a (Microbial infection) Glycyl lysine isopeptide (Lys-Gly) (interchain with G-Cter in ubiquitin) linkage.

Belongs to the gasdermin family. As to quaternary structure, homooligomer; homooligomeric ring-shaped pore complex containing 24-26 subunits when inserted in the membrane. Cleavage by granzyme A (GZMA) relieves autoinhibition by releasing the N-terminal moiety (Gasdermin-B, N-terminal) that initiates pyroptosis. Not cleaved by other granzymes. Major cleavage site takes places after Lys-244; a minor cleavage site takes place after Lys-229. Cleavage by neutrophil elastase ELANE, inhibits its ability to trigger pyroptosis. In terms of processing, palmitoylated. Post-translationally, (Microbial infection) Ubiquitinated by S.flexneri IpaH7.8, leading to its degradation by the proteasome, thereby preventing its ability to form pores in bacterial-derived membranes. In the gastrointestinal tract, expressed in proliferating cells, including in the basal cell layer of esophagus and in isthmus/neck of stomach.

The protein localises to the cytoplasm. It localises to the cell membrane. With respect to regulation, the full-length protein before cleavage is inactive: intramolecular interactions between N- and C-terminal domains mediate autoinhibition in the absence of activation signal. The intrinsic pyroptosis-inducing activity is carried by the released N-terminal moiety (Gasdermin-B, N-terminal) following cleavage by granzyme A (GZMA). Precursor of a pore-forming protein that acts as a downstream mediator of granzyme-mediated cell death. This form constitutes the precursor of the pore-forming protein: upon cleavage, the released N-terminal moiety (Gasdermin-B, N-terminal) binds to membranes and forms pores, triggering pyroptosis. Also acts as a regulator of epithelial cell repair independently of programmed cell death: translocates to the plasma membrane and promotes epithelial maintenance and repair by regulating PTK2/FAK-mediated phosphorylation of PDGFA. Its function is as follows. Pore-forming protein produced by cleavage by granzyme A (GZMA), which causes membrane permeabilization and pyroptosis in target cells of cytotoxic T and natural killer (NK) cells. Key downstream mediator of granzyme-mediated cell death: (1) granzyme A (GZMA), delivered to target cells from cytotoxic T- and NK-cells, (2) specifically cleaves Gasdermin-B to generate this form. After cleavage, moves to the plasma membrane, homooligomerizes within the membrane and forms pores of 10-15 nanometers (nm) of inner diameter, triggering pyroptosis. The different isoforms recognize and bind different phospholipids on membranes, promoting cell death of different target cells. Functionally, precursor of a pore-forming protein that acts as a downstream mediator of granzyme-mediated cell death and mediates pyroptosis. Following cleavage and activation by granzyme A (GZMA), the N-terminal part binds to membrane inner leaflet lipids, homooligomerizes within the human plasma membrane and forms pores of 10-15 nanometers (nm) of inner diameter, triggering pyroptosis. Recognizes and binds membrane inner leaflet lipids of human cells, such as phosphatidylinositol 4-phosphate, phosphatidylinositol 5-phosphate, bisphosphorylated phosphatidylinositols, such as phosphatidylinositol (4,5)-bisphosphate, and more weakly to phosphatidic acid. Also binds sufatide, a component of the apical membrane of epithelial cells. In terms of biological role, precursor of a pore-forming protein that acts as a downstream mediator of granzyme-mediated cell death and mediates pyroptosis of human cells. Following cleavage and activation by granzyme A (GZMA), the N-terminal part binds to membrane inner leaflet lipids, homooligomerizes within the human plasma membrane and forms pores of 10-15 nanometers (nm) of inner diameter, triggering pyroptosis. Precursor of a pore-forming protein that acts as a downstream mediator of granzyme-mediated cell death and specifically mediates cell death of Gram-negative bacteria in response to infection. Following cleavage and activation by granzyme A (GZMA), the N-terminal part recognizes and binds phospholipids found on Gram-negative bacterial membranes, such as lipid A and cariolipin, homooligomerizes within the bacterial membranes and forms pores, triggering pyroptosis followed by cell death. In contrast to isoform 4, does not bind to membrane inner leaflet lipids of host human cell, such as phosphatidylinositol 4-phosphate, phosphatidylinositol 5-phosphate, bisphosphorylated phosphatidylinositols, such as phosphatidylinositol (4,5)-bisphosphate. Its function is as follows. Not able to trigger pyroptosis. In Homo sapiens (Human), this protein is Gasdermin-B.